Consider the following 303-residue polypeptide: Quinolinate synthase (303 aa).

The iminosuccinate site is built by His-23 and Ser-40. Cys-85 contacts [4Fe-4S] cluster. Residues 111–113 and Ser-128 each bind iminosuccinate; that span reads YIN. A [4Fe-4S] cluster-binding site is contributed by Cys-171. Iminosuccinate contacts are provided by residues 197 to 199 and Thr-214; that span reads HPE. Cys-259 lines the [4Fe-4S] cluster pocket.

It belongs to the quinolinate synthase family. Type 2 subfamily. [4Fe-4S] cluster serves as cofactor.

The protein localises to the cytoplasm. It catalyses the reaction iminosuccinate + dihydroxyacetone phosphate = quinolinate + phosphate + 2 H2O + H(+). It participates in cofactor biosynthesis; NAD(+) biosynthesis; quinolinate from iminoaspartate: step 1/1. In terms of biological role, catalyzes the condensation of iminoaspartate with dihydroxyacetone phosphate to form quinolinate. The polypeptide is Quinolinate synthase (Clostridium acetobutylicum (strain ATCC 824 / DSM 792 / JCM 1419 / IAM 19013 / LMG 5710 / NBRC 13948 / NRRL B-527 / VKM B-1787 / 2291 / W)).